The following is a 314-amino-acid chain: Protoheme IX farnesyltransferase (314 aa).

8 helical membrane-spanning segments follow: residues 30–50 (VMSL…VSVH), 51–71 (PVIG…SGAL), 122–142 (FLAA…YSMW), 151–171 (IVIG…IATG), 178–198 (WLMF…LALF), 224–244 (IIAY…SAIG), 247–267 (VYLA…IDIW), and 285–305 (FFRL…LESA).

Belongs to the UbiA prenyltransferase family. Protoheme IX farnesyltransferase subfamily. In terms of assembly, interacts with CtaA.

The protein localises to the cell inner membrane. It carries out the reaction heme b + (2E,6E)-farnesyl diphosphate + H2O = Fe(II)-heme o + diphosphate. It participates in porphyrin-containing compound metabolism; heme O biosynthesis; heme O from protoheme: step 1/1. Functionally, converts heme B (protoheme IX) to heme O by substitution of the vinyl group on carbon 2 of heme B porphyrin ring with a hydroxyethyl farnesyl side group. The sequence is that of Protoheme IX farnesyltransferase from Roseobacter denitrificans (strain ATCC 33942 / OCh 114) (Erythrobacter sp. (strain OCh 114)).